The primary structure comprises 195 residues: Imidazoleglycerol-phosphate dehydratase (195 aa).

This sequence belongs to the imidazoleglycerol-phosphate dehydratase family.

It localises to the cytoplasm. It catalyses the reaction D-erythro-1-(imidazol-4-yl)glycerol 3-phosphate = 3-(imidazol-4-yl)-2-oxopropyl phosphate + H2O. The protein operates within amino-acid biosynthesis; L-histidine biosynthesis; L-histidine from 5-phospho-alpha-D-ribose 1-diphosphate: step 6/9. The sequence is that of Imidazoleglycerol-phosphate dehydratase from Geobacter sulfurreducens (strain ATCC 51573 / DSM 12127 / PCA).